Here is a 473-residue protein sequence, read N- to C-terminus: SHC-transforming protein 1 (473 aa).

A disordered region spans residues 1–26 (MNKLSGGGGRRTRVEGGQLGGEEWTR). Position 29 is a phosphoserine (Ser29). Residue Lys44 is modified to N6-acetyllysine. Residues 46-229 (MGPGVSYLVR…AGFDGSAWDE (184 aa)) enclose the PID domain. The interval 216–314 (HDRMAGFDGS…PSSGRELFDD (99 aa)) is disordered. A CH1 region spans residues 230 to 377 (EEEEPPDHQY…AMAEQLRGEP (148 aa)). Phosphotyrosine occurs at positions 239, 240, and 317. Positions 328–348 (QAGAGAGPPNPTINGSAPRDL) are disordered. Ser343 is modified (phosphoserine). Positions 378–469 (WFHGKLSRRE…GSELCLQQPV (92 aa)) constitute an SH2 domain.

As to quaternary structure, interacts with CPNE3; this interaction may mediate the binding of CPNE3 with ERBB2. Interacts with the Trk receptors NTRK1, NTRK2 and NTRK3; in a phosphotyrosine-dependent manner. Interacts with the NPXY motif of tyrosine-phosphorylated IGF1R and INSR in vitro via the PID domain. Once activated, binds to GRB2. Interacts with tyrosine-phosphorylated CD3T and DDR2. Interacts with the N-terminal region of APS. Interacts with phosphorylated LRP1 and IRS4. Interacts with INPP5D/SHIP1 and INPPL1/SHIP2. Interacts with ALK, GAB2, GRB7 and KIT. Interacts with PTPN6/SHP (tyrosine phosphorylated). Identified in a complex containing FGFR4, NCAM1, CDH2, PLCG1, FRS2, SRC, SHC1, GAP43 and CTTN. Interacts with FLT4 (tyrosine-phosphorylated). Interacts with EPHB1 and GRB2; activates the MAPK/ERK cascade to regulate cell migration. Interacts with PDGFRB (tyrosine-phosphorylated). Interacts with ERBB4. Interacts with TEK/TIE2 (tyrosine-phosphorylated). Interacts with PTK2/FAK1. Interacts with CEACAM1; this interaction is CEACAM1-phosphorylation-dependent and mediates interaction with EGFR or INSR resulting in decrease coupling of SHC1 to the MAPK3/ERK1-MAPK1/ERK2 pathway. Interacts (via PID domain) with PEAK1 (when phosphorylated). Found in a complex with PPP1CA, PPP1CC, SHC1 and PEAK1. Phosphorylated by activated epidermal growth factor receptor. Phosphorylated in response to KIT signaling. Tyrosine phosphorylated in response to FLT3 and FLT4 signaling and by ligand-activated ALK. Tyrosine phosphorylated by ligand-activated PDGFRB. Tyrosine phosphorylated by TEK/TIE2. May be tyrosine phosphorylated by activated PTK2/FAK1. Tyrosine phosphorylated by activated PTK2B/PYK2. Dephosphorylation by PTPN2 may regulate interaction with GRB2.

The protein localises to the cytoplasm. It is found in the cell junction. The protein resides in the focal adhesion. Functionally, signaling adapter that couples activated growth factor receptors to signaling pathways. Participates in a signaling cascade initiated by activated KIT and KITLG/SCF. Participates in signaling downstream of the angiopoietin receptor TEK/TIE2, and plays a role in the regulation of endothelial cell migration and sprouting angiogenesis. The sequence is that of SHC-transforming protein 1 (SHC1) from Bos taurus (Bovine).